A 427-amino-acid chain; its full sequence is Glutamate-1-semialdehyde 2,1-aminomutase (427 aa).

N6-(pyridoxal phosphate)lysine is present on Lys-265.

The protein belongs to the class-III pyridoxal-phosphate-dependent aminotransferase family. HemL subfamily. Homodimer. Pyridoxal 5'-phosphate serves as cofactor.

It localises to the cytoplasm. The catalysed reaction is (S)-4-amino-5-oxopentanoate = 5-aminolevulinate. Its pathway is porphyrin-containing compound metabolism; protoporphyrin-IX biosynthesis; 5-aminolevulinate from L-glutamyl-tRNA(Glu): step 2/2. The protein is Glutamate-1-semialdehyde 2,1-aminomutase of Burkholderia lata (strain ATCC 17760 / DSM 23089 / LMG 22485 / NCIMB 9086 / R18194 / 383).